The sequence spans 163 residues: Nucleotide-binding protein PC1_1036 (163 aa).

The protein belongs to the YajQ family.

Nucleotide-binding protein. The polypeptide is Nucleotide-binding protein PC1_1036 (Pectobacterium carotovorum subsp. carotovorum (strain PC1)).